The chain runs to 401 residues: Nodulation protein E (401 aa).

The region spanning 2-400 (DRRVVITGMG…GTNAVLAFKQ (399 aa)) is the Ketosynthase family 3 (KS3) domain. Active-site for beta-ketoacyl synthase activity residues include cysteine 161, histidine 293, and histidine 330. Residues 328–347 (HAHCIGAASALEMIACVMAI) traverse the membrane as a helical segment.

It belongs to the thiolase-like superfamily. Beta-ketoacyl-ACP synthases family.

It localises to the cell inner membrane. In terms of biological role, proposed to synthesize NOD factor fatty acyl chain. Involved in the synthesis of a highly unsaturated fatty acid moiety, which forms part of a lipo-oligosaccharide that is responsible for host specificity. The protein is Nodulation protein E (nodE) of Rhizobium meliloti (Ensifer meliloti).